The chain runs to 140 residues: Large ribosomal subunit protein uL11 (140 aa).

Belongs to the universal ribosomal protein uL11 family. In terms of assembly, part of the ribosomal stalk of the 50S ribosomal subunit. Interacts with L10 and the large rRNA to form the base of the stalk. L10 forms an elongated spine to which L12 dimers bind in a sequential fashion forming a multimeric L10(L12)X complex. In terms of processing, one or more lysine residues are methylated.

Its function is as follows. Forms part of the ribosomal stalk which helps the ribosome interact with GTP-bound translation factors. The protein is Large ribosomal subunit protein uL11 of Symbiobacterium thermophilum (strain DSM 24528 / JCM 14929 / IAM 14863 / T).